Consider the following 525-residue polypeptide: Glucans biosynthesis protein G (525 aa).

Positions 1-35 (MIFRSVSNTDFRARVRTLLLAGSTALAFVAAPVWA) are cleaved as a signal peptide.

Belongs to the OpgD/OpgG family.

The protein resides in the periplasm. It participates in glycan metabolism; osmoregulated periplasmic glucan (OPG) biosynthesis. Functionally, involved in the biosynthesis of osmoregulated periplasmic glucans (OPGs). The protein is Glucans biosynthesis protein G of Pseudomonas paraeruginosa (strain DSM 24068 / PA7) (Pseudomonas aeruginosa (strain PA7)).